The chain runs to 207 residues: GTP cyclohydrolase 1 (207 aa).

Positions 94, 97, and 167 each coordinate Zn(2+).

This sequence belongs to the GTP cyclohydrolase I family. As to quaternary structure, toroid-shaped homodecamer, composed of two pentamers of five dimers.

It catalyses the reaction GTP + H2O = 7,8-dihydroneopterin 3'-triphosphate + formate + H(+). The protein operates within cofactor biosynthesis; 7,8-dihydroneopterin triphosphate biosynthesis; 7,8-dihydroneopterin triphosphate from GTP: step 1/1. This Thermobifida fusca (strain YX) protein is GTP cyclohydrolase 1.